A 269-amino-acid chain; its full sequence is Tryptophan synthase alpha chain (269 aa).

Active-site proton acceptor residues include E50 and D61.

This sequence belongs to the TrpA family. Tetramer of two alpha and two beta chains.

It carries out the reaction (1S,2R)-1-C-(indol-3-yl)glycerol 3-phosphate + L-serine = D-glyceraldehyde 3-phosphate + L-tryptophan + H2O. The protein operates within amino-acid biosynthesis; L-tryptophan biosynthesis; L-tryptophan from chorismate: step 5/5. Its function is as follows. The alpha subunit is responsible for the aldol cleavage of indoleglycerol phosphate to indole and glyceraldehyde 3-phosphate. In Francisella tularensis subsp. tularensis (strain FSC 198), this protein is Tryptophan synthase alpha chain.